Here is a 317-residue protein sequence, read N- to C-terminus: Glycine--tRNA ligase alpha subunit (317 aa).

This sequence belongs to the class-II aminoacyl-tRNA synthetase family. Tetramer of two alpha and two beta subunits.

It is found in the cytoplasm. It carries out the reaction tRNA(Gly) + glycine + ATP = glycyl-tRNA(Gly) + AMP + diphosphate. The chain is Glycine--tRNA ligase alpha subunit from Lactococcus lactis subsp. cremoris (strain SK11).